The following is a 182-amino-acid chain: ATP synthase subunit b, chloroplastic (182 aa).

A helical membrane pass occupies residues 31 to 53; the sequence is IINISVVLGVLVYFGKGVLSNLL.

It belongs to the ATPase B chain family. In terms of assembly, F-type ATPases have 2 components, F(1) - the catalytic core - and F(0) - the membrane proton channel. F(1) has five subunits: alpha(3), beta(3), gamma(1), delta(1), epsilon(1). F(0) has four main subunits: a(1), b(1), b'(1) and c(10-14). The alpha and beta chains form an alternating ring which encloses part of the gamma chain. F(1) is attached to F(0) by a central stalk formed by the gamma and epsilon chains, while a peripheral stalk is formed by the delta, b and b' chains.

It localises to the plastid. The protein localises to the chloroplast thylakoid membrane. In terms of biological role, f(1)F(0) ATP synthase produces ATP from ADP in the presence of a proton or sodium gradient. F-type ATPases consist of two structural domains, F(1) containing the extramembraneous catalytic core and F(0) containing the membrane proton channel, linked together by a central stalk and a peripheral stalk. During catalysis, ATP synthesis in the catalytic domain of F(1) is coupled via a rotary mechanism of the central stalk subunits to proton translocation. Component of the F(0) channel, it forms part of the peripheral stalk, linking F(1) to F(0). This chain is ATP synthase subunit b, chloroplastic, found in Welwitschia mirabilis (Tree tumbo).